Here is a 626-residue protein sequence, read N- to C-terminus: DNA mismatch repair protein MutL (626 aa).

The interval 352–399 (QPPSPSFTSRPSSAGYASGSWHPAVSSPRTEWSPQTAHPAHRPLDLGA) is disordered. The span at 378 to 387 (SPRTEWSPQT) shows a compositional bias: polar residues.

It belongs to the DNA mismatch repair MutL/HexB family.

This protein is involved in the repair of mismatches in DNA. It is required for dam-dependent methyl-directed DNA mismatch repair. May act as a 'molecular matchmaker', a protein that promotes the formation of a stable complex between two or more DNA-binding proteins in an ATP-dependent manner without itself being part of a final effector complex. This is DNA mismatch repair protein MutL from Brucella anthropi (strain ATCC 49188 / DSM 6882 / CCUG 24695 / JCM 21032 / LMG 3331 / NBRC 15819 / NCTC 12168 / Alc 37) (Ochrobactrum anthropi).